The primary structure comprises 151 residues: MGRMHAPGKGISKSALPYRRSVPSWLKLSAEDVKEQIKKLGKKGMTPSQIGIILRDSHGVAQVRFVNGNKVLRIMKAVGLKPDIPEDLYFLIKKAVSIRKHLERNRKDIDSKFRLILIESRIHRLARYYKIKAVLPPNWKYESSTASALVA.

This sequence belongs to the universal ribosomal protein uS15 family.

The protein is Small ribosomal subunit protein uS15 (RpS13) of Anopheles gambiae (African malaria mosquito).